The primary structure comprises 103 residues: UPF0134 protein MPN_484 (103 aa).

It belongs to the UPF0134 family.

The protein is UPF0134 protein MPN_484 of Mycoplasma pneumoniae (strain ATCC 29342 / M129 / Subtype 1) (Mycoplasmoides pneumoniae).